The following is a 76-amino-acid chain: KANTR integral membrane protein (76 aa).

Positions 1 to 25 are cleaved as a signal peptide; it reads MSPFSLLILVICAFSLFFLINLTRG. The Extracellular portion of the chain corresponds to 26 to 34; it reads LSILLVFSK. The chain crosses the membrane as a helical span at residues 35-55; sequence NQLLALLLLSIVSLFSISLIS. Residues 56–76 lie on the Cytoplasmic side of the membrane; it reads ALIFFDLLPSTFFGFILLFFF.

The protein localises to the membrane. The polypeptide is KANTR integral membrane protein (Homo sapiens (Human)).